The sequence spans 103 residues: MILFKNLVFLPSILIGYISIRVSLLVWVNWVLVWSSCFQVAFIFSLWYFILSIYTFFYSKKIKQIISYEPSYFVFSYRAIDLCPERVLLYFFCIFNNVVFPML.

The next 2 membrane-spanning stretches (helical) occupy residues Phe9–Val33 and Val40–Phe57.

Its subcellular location is the membrane. Its function is as follows. Identified in a screen for mutants with decreased levels of rDNA transcription. The chain is Regulator of rDNA transcription protein 1 (RRT1) from Saccharomyces cerevisiae (strain ATCC 204508 / S288c) (Baker's yeast).